The primary structure comprises 221 residues: Iron-sulfur cluster repair protein YtfE (221 aa).

It belongs to the RIC family. YtfE subfamily. Homodimer.

The protein localises to the cytoplasm. Functionally, di-iron-containing protein involved in the repair of iron-sulfur clusters damaged by oxidative and nitrosative stress conditions. This chain is Iron-sulfur cluster repair protein YtfE, found in Edwardsiella ictaluri (strain 93-146).